Reading from the N-terminus, the 109-residue chain is uncharacterized protein (109 aa).

The next 2 membrane-spanning stretches (helical) occupy residues 18 to 38 (TTLA…LLTL) and 48 to 68 (AGLI…VIAL).

It localises to the cell membrane. This is an uncharacterized protein from Mycobacterium tuberculosis (strain CDC 1551 / Oshkosh).